Reading from the N-terminus, the 296-residue chain is Ribonuclease H2 subunit A (296 aa).

Residues 14-236 (PCLMGIDEAG…CTTHLKGEVE (223 aa)) form the RNase H type-2 domain. Positions 20, 21, and 127 each coordinate a divalent metal cation.

The protein belongs to the RNase HII family. Eukaryotic subfamily. Mn(2+) is required as a cofactor. It depends on Mg(2+) as a cofactor.

The enzyme catalyses Endonucleolytic cleavage to 5'-phosphomonoester.. Functionally, catalytic subunit of RNase HII, an endonuclease that specifically degrades the RNA of RNA:DNA hybrids. Participates in DNA replication, possibly by mediating the removal of lagging-strand Okazaki fragment RNA primers during DNA replication. Mediates the excision of single ribonucleotides from DNA:RNA duplexes. In Arabidopsis thaliana (Mouse-ear cress), this protein is Ribonuclease H2 subunit A.